The following is a 423-amino-acid chain: Serine--tRNA ligase (423 aa).

231–233 provides a ligand contact to L-serine; sequence TAE. 262–264 provides a ligand contact to ATP; the sequence is RSE. Glutamate 285 serves as a coordination point for L-serine. Position 349-352 (349-352) interacts with ATP; the sequence is EISS. Serine 384 serves as a coordination point for L-serine.

It belongs to the class-II aminoacyl-tRNA synthetase family. Type-1 seryl-tRNA synthetase subfamily. As to quaternary structure, homodimer. The tRNA molecule binds across the dimer.

The protein localises to the cytoplasm. It catalyses the reaction tRNA(Ser) + L-serine + ATP = L-seryl-tRNA(Ser) + AMP + diphosphate + H(+). The catalysed reaction is tRNA(Sec) + L-serine + ATP = L-seryl-tRNA(Sec) + AMP + diphosphate + H(+). The protein operates within aminoacyl-tRNA biosynthesis; selenocysteinyl-tRNA(Sec) biosynthesis; L-seryl-tRNA(Sec) from L-serine and tRNA(Sec): step 1/1. In terms of biological role, catalyzes the attachment of serine to tRNA(Ser). Is also able to aminoacylate tRNA(Sec) with serine, to form the misacylated tRNA L-seryl-tRNA(Sec), which will be further converted into selenocysteinyl-tRNA(Sec). The protein is Serine--tRNA ligase of Acinetobacter baumannii (strain AB307-0294).